The following is a 669-amino-acid chain: UvrABC system protein B (669 aa).

The Helicase ATP-binding domain occupies 26–414; that stretch reads EGLEDGLAHQ…SGDVVEQVVR (389 aa). 39-46 serves as a coordination point for ATP; it reads GVTGSGKT. The short motif at 92–115 is the Beta-hairpin element; that stretch reads YYDYYQPEAYVPSSDTFIEKDASV. Positions 431-597 constitute a Helicase C-terminal domain; that stretch reads QVDDLLSEIR…GLNKKINDIL (167 aa). Residues 629-664 form the UVR domain; the sequence is ESKIRELEAKMYQHAQDLEFEQAASVRDQVQALREQ.

Belongs to the UvrB family. Forms a heterotetramer with UvrA during the search for lesions. Interacts with UvrC in an incision complex.

It localises to the cytoplasm. In terms of biological role, the UvrABC repair system catalyzes the recognition and processing of DNA lesions. A damage recognition complex composed of 2 UvrA and 2 UvrB subunits scans DNA for abnormalities. Upon binding of the UvrA(2)B(2) complex to a putative damaged site, the DNA wraps around one UvrB monomer. DNA wrap is dependent on ATP binding by UvrB and probably causes local melting of the DNA helix, facilitating insertion of UvrB beta-hairpin between the DNA strands. Then UvrB probes one DNA strand for the presence of a lesion. If a lesion is found the UvrA subunits dissociate and the UvrB-DNA preincision complex is formed. This complex is subsequently bound by UvrC and the second UvrB is released. If no lesion is found, the DNA wraps around the other UvrB subunit that will check the other stand for damage. The polypeptide is UvrABC system protein B (Photorhabdus laumondii subsp. laumondii (strain DSM 15139 / CIP 105565 / TT01) (Photorhabdus luminescens subsp. laumondii)).